A 237-amino-acid chain; its full sequence is Ribose-5-phosphate isomerase A (237 aa).

Substrate contacts are provided by residues 30 to 33 (SGST), 87 to 90 (DGAD), and 100 to 103 (KGGG). Residue Glu109 is the Proton acceptor of the active site. Lys127 serves as a coordination point for substrate.

Belongs to the ribose 5-phosphate isomerase family. As to quaternary structure, homodimer.

It carries out the reaction aldehydo-D-ribose 5-phosphate = D-ribulose 5-phosphate. Its pathway is carbohydrate degradation; pentose phosphate pathway; D-ribose 5-phosphate from D-ribulose 5-phosphate (non-oxidative stage): step 1/1. Its function is as follows. Catalyzes the reversible conversion of ribose-5-phosphate to ribulose 5-phosphate. This is Ribose-5-phosphate isomerase A from Prochlorococcus marinus (strain MIT 9211).